Reading from the N-terminus, the 286-residue chain is Phosphatidylglycerol--prolipoprotein diacylglyceryl transferase (286 aa).

Helical transmembrane passes span 24–44, 72–92, 104–124, 140–160, 190–210, 218–238, and 253–273; these read IGPL…LFAW, FIVW…VLFY, IFAV…VILA, FDVV…ANFI, LYEA…LTHS, RFVG…VEFF, and WLTM…WAMA. Arginine 155 serves as a coordination point for a 1,2-diacyl-sn-glycero-3-phospho-(1'-sn-glycerol).

The protein belongs to the Lgt family.

Its subcellular location is the cell inner membrane. It carries out the reaction L-cysteinyl-[prolipoprotein] + a 1,2-diacyl-sn-glycero-3-phospho-(1'-sn-glycerol) = an S-1,2-diacyl-sn-glyceryl-L-cysteinyl-[prolipoprotein] + sn-glycerol 1-phosphate + H(+). It participates in protein modification; lipoprotein biosynthesis (diacylglyceryl transfer). Catalyzes the transfer of the diacylglyceryl group from phosphatidylglycerol to the sulfhydryl group of the N-terminal cysteine of a prolipoprotein, the first step in the formation of mature lipoproteins. The chain is Phosphatidylglycerol--prolipoprotein diacylglyceryl transferase from Mesorhizobium japonicum (strain LMG 29417 / CECT 9101 / MAFF 303099) (Mesorhizobium loti (strain MAFF 303099)).